A 1274-amino-acid chain; its full sequence is Protein ECM30 (1274 aa).

Disordered regions lie at residues 23–42, 405–439, and 494–517; these read EDAD…SLSV, RRAV…QTKP, and SSSS…DTSN. 3 stretches are compositionally biased toward low complexity: residues 27–42, 409–432, and 494–515; these read ASSP…SLSV, STSS…AAYH, and SSSS…SNDT. Ser635 is subject to Phosphoserine. The span at 803–822 shows a compositional bias: low complexity; that stretch reads NQQHQNQQQGQNDNRGQNQN. The tract at residues 803-842 is disordered; the sequence is NQQHQNQQQGQNDNRGQNQNEDPGQENESPTPYLLFNPAS. Ser1065 bears the Phosphoserine mark. Residues 1100–1149 form a disordered region; it reads HLRSSSSSSSITLEKTTSNSSSIRTRPNSHHVAPETNNNNSTNGNSNNSS. Positions 1110–1125 are enriched in polar residues; sequence ITLEKTTSNSSSIRTR. Low complexity predominate over residues 1135 to 1149; the sequence is TNNNNSTNGNSNNSS.

The protein localises to the cytoplasm. Functionally, seems to be involved in cell wall organization and biogenesis. The polypeptide is Protein ECM30 (ECM30) (Saccharomyces cerevisiae (strain ATCC 204508 / S288c) (Baker's yeast)).